A 102-amino-acid polypeptide reads, in one-letter code: Thioredoxin (102 aa).

The Thioredoxin domain maps to 2 to 102 (LHIDELTFEN…ILIHTINKYL (101 aa)). Residues Cys29 and Cys32 each act as nucleophile in the active site. Residues Cys29 and Cys32 are joined by a disulfide bond.

It belongs to the thioredoxin family.

The protein localises to the plastid. Its subcellular location is the chloroplast. Functionally, participates in various redox reactions through the reversible oxidation of its active center dithiol to a disulfide and catalyzes dithiol-disulfide exchange reactions. This is Thioredoxin (trxA) from Cyanidioschyzon merolae (strain NIES-3377 / 10D) (Unicellular red alga).